The primary structure comprises 1022 residues: MSKNGNQDISEFDPLNREFTEAEKQQQMQQEQEFFSQTILDIADDGFMVASSSQATPSISFLSNNRPHGDHKSDPITEAIRKEILEKQRDILREYFVNTNPELAEQIAKEEDDRKFRAFLSNQDNYALINKAFEDTKTKKNLEKAEIVGYKNVLSTYSVANGYQGGFQPVQWENQVSASDLRSTVVKNDEGEELCTLNETTVKTKDLIVAKQDGTQVQINSYREINFPIKLDKANGSMHLSMVALKADGTKPAKDKAVYFTAHYEEGPNGKPQLKEISSPQPLKFVGTGDDAVAYIEHGGEIYTLAVTRGKYKEMMKEVALNHGQSVALSQTIAEDLTHVQGPSHETHKPIIIPNQELESSIEQHTSQQVPPITTFNKSLQPKISQIHQLQPQQAQSSGIPNPVLNAANALSTSMQDLLNNINSYLTKNQDINKQSDLIKEAAIAILNNKKSDFAEKQYNIIDLAKNIFSNKDIIADAKVNVVNTLLETIQNDQNTLDIKKSKILEDTVAITLNSENIELKQKQQILEKVVDIGLSIKDDISRVVAVDSIMDTVIKSNIANEDKEKIFITVFDQINSYEFSNVAKQKLLDSILKKTAETQVLSPEQQQLMNQNLDNITTEHTKRDTIEKVNNILLEPLSNTALKTTNIQVMTSNVLDSPVQIEMKSKLIQVVTKTVAESALVEPKDKTEIVKGIGKTIVTHSDTSLPLHDKVVIMGSVAKGIVESKNDLLDRELIIAGLVDGIYEAKGDNAVVHAISSMIANSNINQSEKEALKRSQDVVSEKVLDKEIQNLDRELKAQNINESKLHDDIYNKTQDVANALKNVITTVLDDNSGQRGVSEEAPKKVSSLLNDISKRTIEKINNLRAMLSQDGNLKTFEEKKDEATKKVDELVKAFDNKSSTEEQQNFIKSNLIDNKTLSREIRLQIIDNLLKAQAQKRAETIENLSAKTEDVRVISGKSELKPISQDEPYIQKAKMVVERDRVDIKDNIKIMSALINARDSIQSENFNKSIHIKKESSFPQR.

A disordered region spans residues 1–33; the sequence is MSKNGNQDISEFDPLNREFTEAEKQQQMQQEQE. Positions 14-24 are enriched in basic and acidic residues; the sequence is PLNREFTEAEK.

The protein localises to the cytoplasm. The sequence is that of Antigenic heat-stable 120 kDa protein (sca4) from Rickettsia prowazekii (strain Madrid E).